A 177-amino-acid polypeptide reads, in one-letter code: GTP-dependent dephospho-CoA kinase (177 aa).

Residues D48, V49, V50, D67, K69, E124, and D147 each coordinate GTP.

This sequence belongs to the GTP-dependent DPCK family.

It catalyses the reaction 3'-dephospho-CoA + GTP = GDP + CoA + H(+). Its pathway is cofactor biosynthesis; coenzyme A biosynthesis. In terms of biological role, catalyzes the GTP-dependent phosphorylation of the 3'-hydroxyl group of dephosphocoenzyme A to form coenzyme A (CoA). This is GTP-dependent dephospho-CoA kinase from Thermococcus onnurineus (strain NA1).